A 130-amino-acid chain; its full sequence is Small ribosomal subunit protein uS11 (130 aa).

This sequence belongs to the universal ribosomal protein uS11 family. As to quaternary structure, part of the 30S ribosomal subunit. Interacts with proteins S7 and S18. Binds to IF-3.

Functionally, located on the platform of the 30S subunit, it bridges several disparate RNA helices of the 16S rRNA. Forms part of the Shine-Dalgarno cleft in the 70S ribosome. The protein is Small ribosomal subunit protein uS11 of Synechococcus sp. (strain CC9902).